The sequence spans 239 residues: Ribosomal RNA small subunit methyltransferase G (239 aa).

Residues G77, F82, A128–E129, and R146 each bind S-adenosyl-L-methionine. The segment at R217–S239 is disordered.

It belongs to the methyltransferase superfamily. RNA methyltransferase RsmG family.

It localises to the cytoplasm. In terms of biological role, specifically methylates the N7 position of guanine in position 535 of 16S rRNA. This is Ribosomal RNA small subunit methyltransferase G from Staphylococcus epidermidis (strain ATCC 12228 / FDA PCI 1200).